The chain runs to 633 residues: DEAD-box ATP-dependent RNA helicase 37 (633 aa).

Residues 1-110 (MSASWADVAD…WNNRSGGWDR (110 aa)) form a disordered region. At S2 the chain carries N-acetylserine. A compositionally biased stretch (polar residues) spans 11–25 (SENTGSGSSNQNSHP). Gly residues-rich tracts occupy residues 68-80 (GGSG…GGGY) and 87-101 (PGSG…GGGW). Positions 159–187 (NTFAEIDLGEALNLNIRRCKYVKPTPVQR) match the Q motif motif. One can recognise a Helicase ATP-binding domain in the interval 190–374 (IPILLEGRDL…ADFLANYIFL (185 aa)). 203–210 (AQTGSGKT) serves as a coordination point for ATP. The short motif at 318-321 (DEAD) is the DEAD box element. The Helicase C-terminal domain occupies 401–552 (HLMDLLHAQR…EVPEWLTRYA (152 aa)). The tract at residues 555-600 (SSFGGGKNRRSGGRFGGRDFRREGSFGSGRGGYGGGGGGYGGGGGY) is disordered. Over residues 580–600 (FGSGRGGYGGGGGGYGGGGGY) the composition is skewed to gly residues.

It belongs to the DEAD box helicase family. DDX3/DED1 subfamily.

It carries out the reaction ATP + H2O = ADP + phosphate + H(+). The protein is DEAD-box ATP-dependent RNA helicase 37 (RH37) of Arabidopsis thaliana (Mouse-ear cress).